A 94-amino-acid polypeptide reads, in one-letter code: Gibberellin-regulated protein 11 (94 aa).

The first 23 residues, 1 to 23, serve as a signal peptide directing secretion; it reads MAVFRVLLASLLISLLVLDFVHA.

Belongs to the GASA family. Six disulfide bonds may be present.

The protein localises to the secreted. In terms of biological role, gibberellin-regulated protein that may function in hormonal controlled steps of development such as seed germination, flowering and seed maturation. This chain is Gibberellin-regulated protein 11 (GASA11), found in Arabidopsis thaliana (Mouse-ear cress).